The sequence spans 189 residues: Protein OPG107 (189 aa).

Topologically, residues M1–K28 are intravirion. Residues T29–Q49 form a helical; Signal-anchor for type III membrane protein membrane-spanning segment. At T50 to E189 the chain is on the virion surface side.

The protein belongs to the orthopoxvirus OPG107 family. In terms of assembly, part of a stable entry-fusion complex (EFC) which is at least composed of proteins OPG143, OPG147, OPG155, OPG86, OPG94, OPG107, OPG104, and OPG099. Formation of the viral membrane is necessary for the assembly of the complex. In terms of processing, contains two intramolecular disulfide bonds. They are created by the viral disulfide bond formation pathway, a poxvirus-specific pathway that operates on the cytoplasmic side of the MV membranes.

It localises to the virion membrane. The protein localises to the host endoplasmic reticulum membrane. Functionally, envelope protein part of the entry-fusion complex responsible for the virus membrane fusion with host cell membrane during virus entry. Also plays a role in cell-cell fusion (syncytium formation). The sequence is that of Protein OPG107 (OPG107) from Bos taurus (Bovine).